A 174-amino-acid chain; its full sequence is MEGKRSQGQGYMKKKSYLVEEDMETDTDEEEEVGRDRVRGSRGSINRGGSLRLCQVDRCTADMKEAKLYHRRHKVCEVHAKASSVFLSGLNQRFCQQCSRFHDLQEFDEAKRSCRRRLAGHNERRRKSSGESTYGEGSGRRGINGQVVMQNQERSRVEMTLPMPNSSFKRPQIR.

The tract at residues 1–42 (MEGKRSQGQGYMKKKSYLVEEDMETDTDEEEEVGRDRVRGSR) is disordered. Residues 19 to 33 (VEEDMETDTDEEEEV) are compositionally biased toward acidic residues. The SBP-type zinc-finger motif lies at 51–128 (LRLCQVDRCT…AGHNERRRKS (78 aa)). Zn(2+)-binding residues include Cys-54, Cys-59, Cys-76, His-79, Cys-95, Cys-98, His-102, and Cys-114. Residues 111 to 127 (KRSCRRRLAGHNERRRK) carry the Bipartite nuclear localization signal motif. The span at 118–127 (LAGHNERRRK) shows a compositional bias: basic residues. 2 disordered regions span residues 118-148 (LAGHNERRRKSSGESTYGEGSGRRGINGQVV) and 155-174 (SRVEMTLPMPNSSFKRPQIR). Polar residues predominate over residues 163–174 (MPNSSFKRPQIR).

Requires Zn(2+) as cofactor. In terms of tissue distribution, expressed in the rib meristem and inter-primordial tissue of the inflorescence apex.

The protein resides in the nucleus. It localises to the cytoplasm. Functionally, trans-acting factor that binds specifically to the consensus nucleotide sequence 5'-TNCGTACAA-3' of AP1 promoter. Promotes both vegetative phase change and flowering. In Arabidopsis thaliana (Mouse-ear cress), this protein is Squamosa promoter-binding-like protein 4 (SPL4).